The chain runs to 316 residues: L-lactate dehydrogenase (316 aa).

Residues valine 15, aspartate 37, lysine 42, tyrosine 68, and 82-83 (GL) each bind NAD(+). Substrate contacts are provided by residues glutamine 85, arginine 91, and 123–126 (NPVD). Residues 121–123 (ASN) and threonine 146 contribute to the NAD(+) site. Substrate is bound at residue 151 to 154 (DTSR). 2 residues coordinate beta-D-fructose 1,6-bisphosphate: arginine 156 and histidine 171. Residue histidine 178 is the Proton acceptor of the active site. Phosphotyrosine is present on tyrosine 222. Threonine 231 serves as a coordination point for substrate.

It belongs to the LDH/MDH superfamily. LDH family. As to quaternary structure, homotetramer.

Its subcellular location is the cytoplasm. The enzyme catalyses (S)-lactate + NAD(+) = pyruvate + NADH + H(+). Its pathway is fermentation; pyruvate fermentation to lactate; (S)-lactate from pyruvate: step 1/1. With respect to regulation, allosterically activated by fructose 1,6-bisphosphate (FBP). Functionally, catalyzes the conversion of lactate to pyruvate. In Borreliella afzelii (strain PKo) (Borrelia afzelii), this protein is L-lactate dehydrogenase.